The primary structure comprises 402 residues: Alanine racemase (402 aa).

Lys34 (proton acceptor; specific for D-alanine) is an active-site residue. At Lys34 the chain carries N6-(pyridoxal phosphate)lysine. Arg133 is a binding site for substrate. The RPE1 insert domain maps to Glu226 to Arg271. Tyr296 (proton acceptor; specific for L-alanine) is an active-site residue. Met344 serves as a coordination point for substrate.

It belongs to the alanine racemase family. Pyridoxal 5'-phosphate is required as a cofactor.

The catalysed reaction is L-alanine = D-alanine. It functions in the pathway amino-acid biosynthesis; D-alanine biosynthesis; D-alanine from L-alanine: step 1/1. Its function is as follows. Catalyzes the interconversion of L-alanine and D-alanine. May also act on other amino acids. This is Alanine racemase (alr) from Rickettsia typhi (strain ATCC VR-144 / Wilmington).